A 377-amino-acid polypeptide reads, in one-letter code: Anhydro-N-acetylmuramic acid kinase (377 aa).

ATP is bound at residue 14 to 21 (GTSLDGVD).

The protein belongs to the anhydro-N-acetylmuramic acid kinase family.

The catalysed reaction is 1,6-anhydro-N-acetyl-beta-muramate + ATP + H2O = N-acetyl-D-muramate 6-phosphate + ADP + H(+). It functions in the pathway amino-sugar metabolism; 1,6-anhydro-N-acetylmuramate degradation. The protein operates within cell wall biogenesis; peptidoglycan recycling. In terms of biological role, catalyzes the specific phosphorylation of 1,6-anhydro-N-acetylmuramic acid (anhMurNAc) with the simultaneous cleavage of the 1,6-anhydro ring, generating MurNAc-6-P. Is required for the utilization of anhMurNAc either imported from the medium or derived from its own cell wall murein, and thus plays a role in cell wall recycling. This chain is Anhydro-N-acetylmuramic acid kinase, found in Pasteurella multocida (strain Pm70).